The following is a 425-amino-acid chain: Histidine--tRNA ligase (425 aa).

It belongs to the class-II aminoacyl-tRNA synthetase family. In terms of assembly, homodimer.

It is found in the cytoplasm. It catalyses the reaction tRNA(His) + L-histidine + ATP = L-histidyl-tRNA(His) + AMP + diphosphate + H(+). The chain is Histidine--tRNA ligase from Listeria monocytogenes serotype 4b (strain F2365).